Here is a 1903-residue protein sequence, read N- to C-terminus: Plexin-A4 (1903 aa).

The N-terminal stretch at 1 to 26 (MAFHNRRWNFTFSCCVVVLLLPLVAA) is a signal peptide. The Sema domain occupies 27-515 (RPQQPSAATR…SESQLTRVPV (489 aa)). Topologically, residues 27-1246 (RPQQPSAATR…ITSDSPLSST (1220 aa)) are extracellular. Disulfide bonds link Cys97–Cys106 and Cys132–Cys140. The N-linked (GlcNAc...) asparagine glycan is linked to Asn166. Cystine bridges form between Cys291–Cys413, Cys307–Cys364, and Cys382–Cys401. Asn450 carries an N-linked (GlcNAc...) asparagine glycan. Positions 517–567 (ACEQYSSCNECLGSGDPHCGWCVLHSMCTRKEKCERSSEPRRFASNIKQCV) constitute a PSI 1 domain. 4 cysteine pairs are disulfide-bonded: Cys518/Cys535, Cys524/Cys566, Cys527/Cys544, and Cys538/Cys550. Residues Asn575 and Asn600 are each glycosylated (N-linked (GlcNAc...) asparagine). Cys601 and Cys620 are disulfide-bonded. N-linked (GlcNAc...) asparagine glycosylation is found at Asn656, Asn663, Asn764, and Asn772. The PSI 2 domain maps to 663–710 (NCSVHKSCLSCVGSPYQCHWCKYRHTCTHDPSSCSFQEGRVKQPEECP). The PSI 3 domain maps to 811 to 864 (KCDARRESCGLCLKADPLFGCVWCKGENRCSLKQHCSYPQSMWLEHNGINSKCT). IPT/TIG domains lie at 866 to 960 (PRIT…YYFV), 962 to 1046 (PQLL…FEYV), 1049 to 1148 (PTIT…FVYY), and 1151 to 1246 (PVFE…LSST). Residues Asn981, Asn992, Asn1025, Asn1141, Asn1189, and Asn1214 are each glycosylated (N-linked (GlcNAc...) asparagine). The chain crosses the membrane as a helical span at residues 1247-1267 (AVISIAGAGGLLIFFIVIVLI). Over 1268 to 1903 (AYKRKSRESD…QVVAFMSLES (636 aa)) the chain is Cytoplasmic.

The protein belongs to the plexin family.

It localises to the cell membrane. Involved in the development of primary sensory neurons especially in branching of the peripheral axons. Interacts with the SLIT2 signaling specifically to promote axonal branching of Rohon-Beard neurons and the trigeminal sensory ganglion neurons. This Danio rerio (Zebrafish) protein is Plexin-A4 (plxna4).